Reading from the N-terminus, the 86-residue chain is Toxin Td1 (86 aa).

The N-terminal stretch at 1–20 is a signal peptide; the sequence is MIRFILFISCFFLIGMVIEC. The 63-residue stretch at 21-83 folds into the LCN-type CS-alpha/beta domain; it reads KDGYLMEPNG…VWERATNRCG (63 aa). 4 disulfides stabilise this stretch: Cys31/Cys82, Cys35/Cys57, Cys43/Cys63, and Cys47/Cys65. Residue Lys84 is modified to Lysine amide.

Expressed by the venom gland.

Its subcellular location is the secreted. Beta toxins bind voltage-independently at site-4 of sodium channels (Nav) and shift the voltage of activation toward more negative potentials thereby affecting sodium channel activation and promoting spontaneous and repetitive firing. The polypeptide is Toxin Td1 (Tityus discrepans (Venezuelan scorpion)).